The chain runs to 780 residues: 5-methyltetrahydropteroyltriglutamate--homocysteine methyltransferase (780 aa).

5-methyltetrahydropteroyltri-L-glutamate contacts are provided by residues 15 to 18 and lysine 114; that span reads RELK. L-homocysteine-binding positions include 457 to 459 and glutamate 510; that span reads IGS. L-methionine is bound by residues 457–459 and glutamate 510; that span reads IGS. 5-methyltetrahydropteroyltri-L-glutamate is bound by residues 541 to 542 and tryptophan 587; that span reads RC. Aspartate 625 contributes to the L-homocysteine binding site. An L-methionine-binding site is contributed by aspartate 625. Glutamate 631 serves as a coordination point for 5-methyltetrahydropteroyltri-L-glutamate. The Zn(2+) site is built by histidine 667, cysteine 669, and glutamate 691. Residue histidine 720 is the Proton donor of the active site. Position 752 (cysteine 752) interacts with Zn(2+).

Belongs to the vitamin-B12 independent methionine synthase family. Requires Zn(2+) as cofactor.

It carries out the reaction 5-methyltetrahydropteroyltri-L-glutamate + L-homocysteine = tetrahydropteroyltri-L-glutamate + L-methionine. It participates in amino-acid biosynthesis; L-methionine biosynthesis via de novo pathway; L-methionine from L-homocysteine (MetE route): step 1/1. In terms of biological role, catalyzes the transfer of a methyl group from 5-methyltetrahydrofolate to homocysteine resulting in methionine formation. The chain is 5-methyltetrahydropteroyltriglutamate--homocysteine methyltransferase from Nitratidesulfovibrio vulgaris (strain DSM 19637 / Miyazaki F) (Desulfovibrio vulgaris).